The primary structure comprises 170 residues: Myosin regulatory light chain 11 (170 aa).

Residue A2 is modified to N,N,N-trimethylalanine. S16 and S17 each carry phosphoserine. A phosphothreonine mark is found at T26 and T36. Residues 26–61 (TQIQEFKEAFTVIDQNRDGIIDKEDLRDTFAAMGRL) enclose the EF-hand 1 domain. 4 residues coordinate Ca(2+): D39, N41, D43, and D50. A Phosphoserine modification is found at S76. EF-hand domains follow at residues 96–131 (DPEDVITGAFKVLDPEGKGTIKKQFLEELLTTQCDR) and 132–167 (FSQEEIKNMWAAFPPDVGGNVDYKNICYVITHGDAK). T102 carries the post-translational modification Phosphothreonine.

As to quaternary structure, myosin is a hexamer of 2 heavy chains and 4 light chains. Post-translationally, n,N,N-trimethylalanine found in this myosin light chain would not have been detected in the N-terminal tryptic peptide in PubMed:863872 and PubMed:352892 because it would remain trimethylated and ninhydrin negative after hydrolysis.

Functionally, myosin regulatory subunit that plays an essential role to maintain muscle integrity during early development. Plays a role in muscle contraction. This is Myosin regulatory light chain 11 (MYL11) from Oryctolagus cuniculus (Rabbit).